Consider the following 271-residue polypeptide: Cyanophycinase (271 aa).

Residues Ser132, His174, and Glu201 each act as charge relay system in the active site.

Belongs to the peptidase S51 family. Homodimer.

The enzyme catalyses [L-4-(L-arginin-2-N-yl)aspartate](n) + H2O = [L-4-(L-arginin-2-N-yl)aspartate](n-1) + L-4-(L-arginin-2-N-yl)aspartate. Its function is as follows. Exopeptidase that catalyzes the hydrolytic cleavage of multi-L-arginyl-poly-L-aspartic acid (cyanophycin; a water-insoluble reserve polymer) into aspartate-arginine dipeptides. The protein is Cyanophycinase (cphB) of Synechocystis sp. (strain ATCC 27184 / PCC 6803 / Kazusa).